The primary structure comprises 144 residues: Putative pre-16S rRNA nuclease (144 aa).

Belongs to the YqgF nuclease family.

The protein resides in the cytoplasm. Could be a nuclease involved in processing of the 5'-end of pre-16S rRNA. This chain is Putative pre-16S rRNA nuclease, found in Oenococcus oeni (strain ATCC BAA-331 / PSU-1).